Consider the following 315-residue polypeptide: Ribonuclease Z (315 aa).

Zn(2+)-binding residues include His-61, His-63, Asp-65, His-66, His-151, Asp-219, and His-278. The active-site Proton acceptor is Asp-65.

It belongs to the RNase Z family. Homodimer. The cofactor is Zn(2+).

It carries out the reaction Endonucleolytic cleavage of RNA, removing extra 3' nucleotides from tRNA precursor, generating 3' termini of tRNAs. A 3'-hydroxy group is left at the tRNA terminus and a 5'-phosphoryl group is left at the trailer molecule.. Its function is as follows. Zinc phosphodiesterase, which displays some tRNA 3'-processing endonuclease activity. Probably involved in tRNA maturation, by removing a 3'-trailer from precursor tRNA. In Clostridium botulinum (strain Eklund 17B / Type B), this protein is Ribonuclease Z.